Reading from the N-terminus, the 224-residue chain is Myogenin (224 aa).

Residues serine 77 and serine 79 each carry the phosphoserine; by CaMK2G modification. The bHLH domain maps to 81–132 (DRRRAATLREKRRLKKVNEAFEALKRSTLLNPNQRLPKVEILRSAIQYIERL). A Phosphothreonine; by CaMK2G modification is found at threonine 87.

In terms of assembly, homodimer and heterodimer with E12; heterodimerization enhances MYOG DNA-binding and transcriptional activities. Interacts with SMARCA4/BRG1/BAF190A. Interacts (via C-terminal region) with SSRP1 and SUPT16H; the interaction is indicative of an interaction with the FACT complex. nteracts with CSRP3. In terms of processing, phosphorylated by CAMK2G on threonine and serine amino acids in a muscle activity-dependent manner. Phosphorylation of Thr-87 impairs both DNA-binding and trans-activation functions in contracting muscles. As to expression, expressed in myoblast cells. Expressed weakly in myotubes (at protein level). Expressed strongly in denervated muscles and in satellite cells isolated from denervated muscles. Expressed weakly in innervated muscle and in satellite cells isolated from innervated muscles.

It localises to the nucleus. In terms of biological role, acts as a transcriptional activator that promotes transcription of muscle-specific target genes and plays a role in muscle differentiation, cell cycle exit and muscle atrophy. Essential for the development of functional embryonic skeletal fiber muscle differentiation. However is dispensable for postnatal skeletal muscle growth; phosphorylation by CAMK2G inhibits its transcriptional activity in respons to muscle activity. Required for the recruitment of the FACT complex to muscle-specific promoter regions, thus promoting gene expression initiation. During terminal myoblast differentiation, plays a role as a strong activator of transcription at loci with an open chromatin structure previously initiated by MYOD1. Together with MYF5 and MYOD1, co-occupies muscle-specific gene promoter core regions during myogenesis. Also cooperates with myocyte-specific enhancer factor MEF2D and BRG1-dependent recruitment of SWI/SNF chromatin-remodeling enzymes to alter chromatin structure at myogenic late gene promoters. Facilitates cell cycle exit during terminal muscle differentiation through the up-regulation of miR-20a expression, which in turn represses genes involved in cell cycle progression. Binds to the E-box containing (E1) promoter region of the miR-20a gene. Also plays a role in preventing reversal of muscle cell differentiation. Contributes to the atrophy-related gene expression in adult denervated muscles. Induces fibroblasts to differentiate into myoblasts. This chain is Myogenin (Myog), found in Mus musculus (Mouse).